A 234-amino-acid chain; its full sequence is Uridylate kinase (234 aa).

10–11 provides a ligand contact to ATP; it reads GS. UMP is bound at residue glycine 44. Positions 45 and 49 each coordinate ATP. Residues aspartate 66 and 114–120 each bind UMP; that span reads ITPAQTT. ATP is bound by residues threonine 140, tyrosine 146, and aspartate 149.

It belongs to the UMP kinase family. Homohexamer.

The protein resides in the cytoplasm. It carries out the reaction UMP + ATP = UDP + ADP. It functions in the pathway pyrimidine metabolism; CTP biosynthesis via de novo pathway; UDP from UMP (UMPK route): step 1/1. With respect to regulation, inhibited by UTP. Its function is as follows. Catalyzes the reversible phosphorylation of UMP to UDP. The chain is Uridylate kinase from Methanoculleus marisnigri (strain ATCC 35101 / DSM 1498 / JR1).